Reading from the N-terminus, the 125-residue chain is MLFRRLFSSSVIVQAASKTSLRKTVKPSEEIPDVNAFLGRIGRKCDEFTDTYENKWDNLFTWGGPVLKEKGIPIQQRRYILNQVEKLRKGEEIKEIKKGKKSFFGGERKRKETIAKWRAEQRNAE.

A mitochondrion-targeting transit peptide spans 1-23 (MLFRRLFSSSVIVQAASKTSLRK).

Belongs to the mitochondrion-specific ribosomal protein mS41 family.

The protein resides in the mitochondrion. Functionally, involved in telomere length regulation. The chain is Small ribosomal subunit protein mS41 (FYV4) from Kluyveromyces lactis (strain ATCC 8585 / CBS 2359 / DSM 70799 / NBRC 1267 / NRRL Y-1140 / WM37) (Yeast).